The following is a 504-amino-acid chain: Maturase K (504 aa).

Belongs to the intron maturase 2 family. MatK subfamily.

The protein resides in the plastid. The protein localises to the chloroplast. Its function is as follows. Usually encoded in the trnK tRNA gene intron. Probably assists in splicing its own and other chloroplast group II introns. In Barbarea vulgaris (Yellow rocket), this protein is Maturase K.